Here is a 242-residue protein sequence, read N- to C-terminus: Uridylate kinase (242 aa).

Position 11-14 (11-14 (KLSG)) interacts with ATP. Positions 19-24 (GNMGYG) are involved in allosteric activation by GTP. Gly53 is a binding site for UMP. Gly54 and Arg58 together coordinate ATP. Residues Asp73 and 134–141 (SGNPFFTT) contribute to the UMP site. Thr161, Tyr167, and Asp170 together coordinate ATP.

It belongs to the UMP kinase family. In terms of assembly, homohexamer.

Its subcellular location is the cytoplasm. The enzyme catalyses UMP + ATP = UDP + ADP. Its pathway is pyrimidine metabolism; CTP biosynthesis via de novo pathway; UDP from UMP (UMPK route): step 1/1. Allosterically activated by GTP. Inhibited by UTP. Catalyzes the reversible phosphorylation of UMP to UDP. This is Uridylate kinase from Nostoc sp. (strain PCC 7120 / SAG 25.82 / UTEX 2576).